Here is a 211-residue protein sequence, read N- to C-terminus: uncharacterized protein (211 aa).

The first 27 residues, 1–27 (MKRTSAALVVFLILLFLGLLFLPMFIV), serve as a signal peptide directing secretion.

This is an uncharacterized protein from Archaeoglobus fulgidus (strain ATCC 49558 / DSM 4304 / JCM 9628 / NBRC 100126 / VC-16).